A 142-amino-acid chain; its full sequence is ATP synthase epsilon chain (142 aa).

Belongs to the ATPase epsilon chain family. As to quaternary structure, F-type ATPases have 2 components, CF(1) - the catalytic core - and CF(0) - the membrane proton channel. CF(1) has five subunits: alpha(3), beta(3), gamma(1), delta(1), epsilon(1). CF(0) has three main subunits: a, b and c.

It is found in the cell inner membrane. In terms of biological role, produces ATP from ADP in the presence of a proton gradient across the membrane. The sequence is that of ATP synthase epsilon chain from Histophilus somni (strain 2336) (Haemophilus somnus).